The primary structure comprises 123 residues: Large ribosomal subunit protein uL18 (123 aa).

Belongs to the universal ribosomal protein uL18 family. As to quaternary structure, part of the 50S ribosomal subunit; part of the 5S rRNA/L5/L18/L25 subcomplex. Contacts the 5S and 23S rRNAs.

Its function is as follows. This is one of the proteins that bind and probably mediate the attachment of the 5S RNA into the large ribosomal subunit, where it forms part of the central protuberance. This is Large ribosomal subunit protein uL18 from Chlamydia trachomatis serovar A (strain ATCC VR-571B / DSM 19440 / HAR-13).